We begin with the raw amino-acid sequence, 130 residues long: Capsid protein (130 aa).

The segment at 32 to 105 (EWISSNSRSQ…FATNSDCELI (74 aa)) is viral RNA-binding.

This sequence belongs to the Leviviricetes capsid protein family. Homodimer. The capsid proteins form dimers that assemble by group of 5. Twelve such pentamers are linked together with free dimers. The homodimers binds to the viral RNA via an operator hairpin, but also to many other RNA sequences in the viral genome; this interaction probably shifts the virus from the replicative to the assembly phase and ensures specific encapsidation of the viral genome.

It localises to the virion. Functionally, capsid protein self-assembles to form an icosahedral capsid with a T=3 symmetry, about 26 nm in diameter, and consisting of 89 capsid proteins dimers (178 capsid proteins). Involved in viral genome encapsidation through the interaction between a capsid protein dimer and the multiple packaging signals present in the RNA genome. The capsid also contains 1 copy of the A2 maturation protein. Acts as a translational repressor of viral replicase synthesis late in infection. This latter function is the result of capsid protein interaction with an RNA hairpin which contains the replicase ribosome-binding site. The polypeptide is Capsid protein (Escherichia coli (Bacteriophage MS2)).